The following is a 335-amino-acid chain: Glyceraldehyde-3-phosphate dehydrogenase 2 (335 aa).

NAD(+) contacts are provided by residues 12–13 (RI), aspartate 35, arginine 79, and serine 121. D-glyceraldehyde 3-phosphate contacts are provided by residues 152–154 (SCT) and threonine 183. Cysteine 153 serves as the catalytic Nucleophile. NAD(+) is bound at residue asparagine 184. Residues arginine 198, 211-212 (TG), and arginine 234 each bind D-glyceraldehyde 3-phosphate. Residue asparagine 316 coordinates NAD(+).

It belongs to the glyceraldehyde-3-phosphate dehydrogenase family. As to quaternary structure, homotetramer.

The protein localises to the cytoplasm. It carries out the reaction D-glyceraldehyde 3-phosphate + phosphate + NAD(+) = (2R)-3-phospho-glyceroyl phosphate + NADH + H(+). It participates in carbohydrate degradation; glycolysis; pyruvate from D-glyceraldehyde 3-phosphate: step 1/5. With respect to regulation, inhibited by pentalenolactone. In terms of biological role, catalyzes the oxidative phosphorylation of glyceraldehyde 3-phosphate (G3P) to 1,3-bisphosphoglycerate (BPG) using the cofactor NAD. The first reaction step involves the formation of a hemiacetal intermediate between G3P and a cysteine residue, and this hemiacetal intermediate is then oxidized to a thioester, with concomitant reduction of NAD to NADH. The reduced NADH is then exchanged with the second NAD, and the thioester is attacked by a nucleophilic inorganic phosphate to produce BPG. In Streptomyces avermitilis (strain ATCC 31267 / DSM 46492 / JCM 5070 / NBRC 14893 / NCIMB 12804 / NRRL 8165 / MA-4680), this protein is Glyceraldehyde-3-phosphate dehydrogenase 2 (gap2).